The sequence spans 685 residues: Linoleate 9/13-lipoxygenase (685 aa).

A signal peptide spans 1-19 (MKRRSVLLSGVALSGTALA). Residues 122 to 685 (ASLPASAAAQ…PSRIPASTNI (564 aa)) enclose the Lipoxygenase domain. Positions 377, 382, 555, 559, and 685 each coordinate Fe cation.

The protein belongs to the lipoxygenase family. Monomer. The cofactor is Fe cation.

Its subcellular location is the periplasm. The enzyme catalyses (9Z,12Z)-octadecadienoate + O2 = (9S)-hydroperoxy-(10E,12Z)-octadecadienoate. It catalyses the reaction (9Z)-octadecenoate + O2 = (8E,10S)-10-hydroperoxy-octadeca-8-enoate. It carries out the reaction (9Z,12Z)-octadecadienoate + O2 = (8E,10S,12Z)-10-hydroperoxyoctadeca-8,12-dienoate. The catalysed reaction is (9Z,12Z,15Z)-octadecatrienoate + O2 = (8E,10S,12Z,15Z)-10-hydroperoxyoctadeca-8,12,15-trienoate. The enzyme catalyses (9Z,12Z)-octadecadienoate + O2 = (13S)-hydroperoxy-(9Z,11E)-octadecadienoate. It catalyses the reaction (9Z,12Z,15Z)-octadecatrienoate + O2 = (13S)-hydroperoxy-(9Z,11E,15Z)-octadecatrienoate. Inhibited by Ba(2+), Zn(2+) and Fe(3+). Its function is as follows. In presence of oxygen, converts linoleate into (9S)-hydroperoxy-10,12-octadecenoate (9HPOD), which spontaneously decomposes to the corresponding 9-hydroxy-10,12-octadecenoate (9HOD), and into 13-hydroperoxy-9,11-octadecenoate (13HPOD) which spontaneously decomposes to the corresponding 13-hydroxy-9,11-octadecenoate (13HOD). Also active on linolenate. To a lesser extent, is also able to convert oleate into (10S)-hydroperoxy-8E-octadecenoate, which spontaneously decomposes to the corresponding 10-hydroxy-8E-octadecenoate. Is almost not active on arachidonate. This chain is Linoleate 9/13-lipoxygenase (lox), found in Pseudomonas aeruginosa.